The following is a 653-amino-acid chain: Sodium-dependent nutrient amino acid transporter 1 (653 aa).

Residues Met-1–Thr-55 form a disordered region. At Met-1–Asn-59 the chain is on the cytoplasmic side. Low complexity-rich tracts occupy residues Asn-10–Glu-24 and Pro-32–Thr-43. The segment covering Thr-44–Thr-55 has biased composition (basic and acidic residues). Transmembrane regions (helical) follow at residues Trp-60 to Val-80, Gly-93 to Leu-113, Thr-125 to Ala-145, and Thr-146 to Val-166. N-linked (GlcNAc...) asparagine glycans are attached at residues Asn-202 and Asn-205. 9 helical membrane-spanning segments follow: residues Pro-241–Met-261, Ala-270–Val-290, Ala-319–Ser-339, Ile-353–Leu-373, Leu-413–Leu-433, Ile-459–Leu-479, Thr-486–Met-506, Cys-528–Ile-548, and Ala-565–Ile-585.

Belongs to the sodium:neurotransmitter symporter (SNF) (TC 2.A.22) family.

Its subcellular location is the membrane. Unusual broad substrate spectrum amino acid:sodium cotransporter that promotes absorption of the D isomers of essential amino acids. Neutral amino acids are the preferred substrates, especially methionine and phenylalanine. The protein is Sodium-dependent nutrient amino acid transporter 1 of Drosophila pseudoobscura pseudoobscura (Fruit fly).